A 392-amino-acid chain; its full sequence is 8-amino-7-oxononanoate synthase (392 aa).

Position 108–109 (108–109 (GF)) interacts with pyridoxal 5'-phosphate. Residue His133 coordinates substrate. Pyridoxal 5'-phosphate-binding positions include Ser180, 205–208 (DDAH), and 236–239 (TLSK). Lys239 carries the N6-(pyridoxal phosphate)lysine modification. A substrate-binding site is contributed by Thr353.

Belongs to the class-II pyridoxal-phosphate-dependent aminotransferase family. BioF subfamily. As to quaternary structure, homodimer. Requires pyridoxal 5'-phosphate as cofactor.

The catalysed reaction is 6-carboxyhexanoyl-[ACP] + L-alanine + H(+) = (8S)-8-amino-7-oxononanoate + holo-[ACP] + CO2. Its pathway is cofactor biosynthesis; biotin biosynthesis. Catalyzes the decarboxylative condensation of pimeloyl-[acyl-carrier protein] and L-alanine to produce 8-amino-7-oxononanoate (AON), [acyl-carrier protein], and carbon dioxide. The protein is 8-amino-7-oxononanoate synthase of Bacillus pumilus (strain SAFR-032).